Consider the following 379-residue polypeptide: MDNLANQGVIVLAAGGTGGHLFPAEALAHELRARGWDVHLATDARAQRFVGAFAQDHVHVIRSATIAGRNPVALLKTFWSLWQGNLDSRKLFRRLKPKLVVGFGGYPTLPPLYAASNMGIPTLIHEQNAVMGRANKGLAGRVKAIAGGFLPENSGAYAAKTVITGNPVRPPVLVAAATPYTPAGKDDRFRLLVFGGSQGAQFFSQAIPAAVALLPEHERARLLITQQARKEDEASARKAYEKLGVPADVAPFFNDMPARMADAHFVIARSGASTVSEITVIGRPAMLVPFPHALDHDQAANAAALAAAGGAEVVRQADLSPQRLAEMLQSAMNEPERLEQQAKAAKSVGKPDAARLLADLAEAIASGKTVQEFKEGNRP.

UDP-N-acetyl-alpha-D-glucosamine contacts are provided by residues 17 to 19 (TGG), asparagine 128, arginine 169, serine 197, and glutamine 298.

This sequence belongs to the glycosyltransferase 28 family. MurG subfamily.

It is found in the cell inner membrane. It catalyses the reaction di-trans,octa-cis-undecaprenyl diphospho-N-acetyl-alpha-D-muramoyl-L-alanyl-D-glutamyl-meso-2,6-diaminopimeloyl-D-alanyl-D-alanine + UDP-N-acetyl-alpha-D-glucosamine = di-trans,octa-cis-undecaprenyl diphospho-[N-acetyl-alpha-D-glucosaminyl-(1-&gt;4)]-N-acetyl-alpha-D-muramoyl-L-alanyl-D-glutamyl-meso-2,6-diaminopimeloyl-D-alanyl-D-alanine + UDP + H(+). It participates in cell wall biogenesis; peptidoglycan biosynthesis. Its function is as follows. Cell wall formation. Catalyzes the transfer of a GlcNAc subunit on undecaprenyl-pyrophosphoryl-MurNAc-pentapeptide (lipid intermediate I) to form undecaprenyl-pyrophosphoryl-MurNAc-(pentapeptide)GlcNAc (lipid intermediate II). This is UDP-N-acetylglucosamine--N-acetylmuramyl-(pentapeptide) pyrophosphoryl-undecaprenol N-acetylglucosamine transferase from Brucella canis (strain ATCC 23365 / NCTC 10854 / RM-666).